A 131-amino-acid chain; its full sequence is Conotoxin Cal8.2 (131 aa).

The first 19 residues, 1 to 19 (MKLLLTLLLGSALMCITLA), serve as a signal peptide directing secretion. The propeptide occupies 20–38 (DECGLGTHRPVKEVIDNVR).

In terms of processing, contains 4 disulfide bonds. As to expression, expressed by the venom duct.

The protein resides in the secreted. Probable neurotoxin with unknown target. Possibly targets ion channels. This is Conotoxin Cal8.2 from Californiconus californicus (California cone).